The sequence spans 855 residues: DNA mismatch repair protein MutS (855 aa).

613-620 contributes to the ATP binding site; it reads GPNMGGKS. The disordered stretch occupies residues 795 to 816; it reads ETTSLPHEVPSQQSGKPASPMQ. Residues 796 to 816 are compositionally biased toward polar residues; sequence TTSLPHEVPSQQSGKPASPMQ.

Belongs to the DNA mismatch repair MutS family.

Functionally, this protein is involved in the repair of mismatches in DNA. It is possible that it carries out the mismatch recognition step. This protein has a weak ATPase activity. In Pseudomonas paraeruginosa (strain DSM 24068 / PA7) (Pseudomonas aeruginosa (strain PA7)), this protein is DNA mismatch repair protein MutS.